A 92-amino-acid chain; its full sequence is Small ribosomal subunit protein uS19c (92 aa).

It belongs to the universal ribosomal protein uS19 family.

The protein resides in the plastid. Its subcellular location is the chloroplast. Functionally, protein S19 forms a complex with S13 that binds strongly to the 16S ribosomal RNA. This Fagopyrum esculentum subsp. ancestrale (Wild buckwheat) protein is Small ribosomal subunit protein uS19c.